We begin with the raw amino-acid sequence, 160 residues long: H/ACA ribonucleoprotein complex subunit 2 (160 aa).

At S15 the chain carries Phosphoserine. T23 bears the Phosphothreonine mark.

The protein belongs to the eukaryotic ribosomal protein eL8 family. In terms of assembly, component of the box H/ACA small nucleolar ribonucleoprotein (H/ACA snoRNP) complex consisting of Nop60B, Gar1, NPH2 and Nop10, and associated with H/ACA-type snoRNAs.

The protein localises to the nucleus. It is found in the nucleolus. Functionally, component of the box H/ACA small nucleolar ribonucleoprotein (H/ACA snoRNP) complex, which catalyzes pseudouridylation of rRNA. This involves the isomerization of uridine such that the ribose is subsequently attached to C5, instead of the normal N1. Pseudouridine ('psi') residues may serve to stabilize the conformation of rRNAs. Required for ribosome biogenesis. H/ACA snoRNP complex-dependent ribosome biogenesis is important in female germline cell differentiation during oogenesis. This chain is H/ACA ribonucleoprotein complex subunit 2, found in Drosophila melanogaster (Fruit fly).